The chain runs to 789 residues: Zinc finger protein GLIS1 (789 aa).

Composition is skewed to basic and acidic residues over residues 1–16 (MHCE…RPKE) and 63–74 (RAHDLLRPRSPR). Disordered regions lie at residues 1–29 (MHCE…GPVS), 53–93 (LLPR…YGHS), and 278–304 (PPLP…QEGS). A compositionally biased stretch (polar residues) spans 80-92 (KTGSGKVNGSYGH). The C2H2-type 1 zinc finger occupies 366–391 (QACRWVDCCAAYEQQEELVRHIEKSH). A C2H2-type 2; atypical zinc finger spans residues 400-427 (FTCFWAGCVRRYKPFNARYKLLIHMRVH). 3 C2H2-type zinc fingers span residues 433–457 (NKCM…LRSH), 463–487 (YLCQ…QRTH), and 493–517 (YACQ…VKAH). Disordered stretches follow at residues 506–529 (DPSS…KKLH) and 573–684 (VYPG…QGYQ). Positions 511–527 (RKHVKAHSAKEQQVRKK) match the Bipartite nuclear localization signal motif. A compositionally biased stretch (low complexity) spans 648 to 658 (ASQSQSPGGQS).

It belongs to the GLI C2H2-type zinc-finger protein family. In terms of assembly, interacts with KLF4. Interacts with POU5F1 and/or POU5F1B. Interacts with SOX2. As to expression, in the adult, expressed highly in placenta and kidney and at lower levels in the testis, brain, colon, brown fat tissue and thymus. During embryo development, expressed in the frontal nasal region, branchial arches, somites, vibrissal and hair follicles, limb buds, craniofacial regions, ventral part of the tail, intervertebral disks, teeth, eyes and kidney.

It localises to the nucleus. Functionally, acts both as a repressor and an ctivator of transcription. Binds to the consensus sequence 5'-GACCACCCAC-3'. By controlling the expression of genes involved in cell differentiation inhibits the lineage commitment of multipotent cells. Prevents, for instance, the differentiation of multipotent mesenchymal cells into adipocyte and osteoblast. The chain is Zinc finger protein GLIS1 from Mus musculus (Mouse).